The sequence spans 108 residues: MAKSRILKGDVVKVIAGSHKGQIGPITSITKDKQWVSVQGITVKKHVKPTNEDSEGGIKDIPAKLHISNVALQDPKNKDQVTKVGFEIINGKKVRIARKSKTQIKTAK.

The protein belongs to the universal ribosomal protein uL24 family. As to quaternary structure, part of the 50S ribosomal subunit.

In terms of biological role, one of two assembly initiator proteins, it binds directly to the 5'-end of the 23S rRNA, where it nucleates assembly of the 50S subunit. Functionally, one of the proteins that surrounds the polypeptide exit tunnel on the outside of the subunit. This chain is Large ribosomal subunit protein uL24, found in Mycoplasma mycoides subsp. mycoides SC (strain CCUG 32753 / NCTC 10114 / PG1).